Reading from the N-terminus, the 151-residue chain is Small ribosomal subunit protein uS15 (151 aa).

The segment at 1-20 (MGRMHSNGKGISGSSLPYNR) is disordered.

It belongs to the universal ribosomal protein uS15 family. As to quaternary structure, component of the small ribosomal subunit. Part of the small subunit (SSU) processome, composed of more than 70 proteins and the RNA chaperone small nucleolar RNA (snoRNA) U3.

It is found in the cytoplasm. The protein resides in the nucleus. Its subcellular location is the nucleolus. Its function is as follows. Component of the small ribosomal subunit. The ribosome is a large ribonucleoprotein complex responsible for the synthesis of proteins in the cell. Part of the small subunit (SSU) processome, first precursor of the small eukaryotic ribosomal subunit. During the assembly of the SSU processome in the nucleolus, many ribosome biogenesis factors, an RNA chaperone and ribosomal proteins associate with the nascent pre-rRNA and work in concert to generate RNA folding, modifications, rearrangements and cleavage as well as targeted degradation of pre-ribosomal RNA by the RNA exosome. The sequence is that of Small ribosomal subunit protein uS15 (rps13) from Dictyostelium discoideum (Social amoeba).